Reading from the N-terminus, the 304-residue chain is Hairy/enhancer-of-split related with YRPW motif protein 1 (304 aa).

The segment at 1 to 52 (MKRAHPEYSSSESELDETIEVEKESADENGNLSSALGSMSPTTSSQILARKR) is disordered. Over residues 28–47 (ENGNLSSALGSMSPTTSSQI) the composition is skewed to polar residues. Positions 48–117 (LARKRRRGII…GGKGYFDAHA (70 aa)) are transcriptional repression and interaction with NCOR1 and SIN3A. The bHLH domain occupies 49 to 104 (ARKRRRGIIEKRRRDRINNSLSELRRLVPSAFEKQGSAKLEKAEILQMTVDHLKML). Positions 122-158 (YRSLGFRECLAEVARYLSIIEGLDASDPLRVRLVSHL) constitute an Orange domain. Over residues 197 to 211 (SQSTHGNTGTSASPT) the composition is skewed to polar residues. The tract at residues 197 to 234 (SQSTHGNTGTSASPTESHHQGRLATAHPEASALRAPPS) is disordered. A YRPW motif motif is present at residues 294 to 297 (YRPW).

This sequence belongs to the HEY family. Self-associates. Interacts with HES1 and HEYL. Interacts with HDAC1, NCOR1 and SIN3A. Interacts with GATA4 and GATA6. Interacts with CCDC89/BOIP.

Its subcellular location is the nucleus. Transcriptional repressor which binds preferentially to the canonical E box sequence 5'-CACGTG-3'. Downstream effector of Notch signaling required for cardiovascular development. Specifically required for the Notch-induced endocardial epithelial to mesenchymal transition, which is itself criticial for cardiac valve and septum development. May be required in conjunction with HEY2 to specify arterial cell fate or identity. Promotes maintenance of neuronal precursor cells and glial versus neuronal fate specification. Represses transcription by the cardiac transcriptional activators GATA4 and GATA6 and by the neuronal bHLH factors ASCL1/MASH1 and NEUROD4/MATH3. The chain is Hairy/enhancer-of-split related with YRPW motif protein 1 (HEY1) from Bos taurus (Bovine).